The primary structure comprises 433 residues: Adenylosuccinate synthetase (433 aa).

GTP-binding positions include 13–19 (GDEGKGK) and 41–43 (GHT). Catalysis depends on D14, which acts as the Proton acceptor. Positions 14 and 41 each coordinate Mg(2+). IMP contacts are provided by residues 14 to 17 (DEGK), 39 to 42 (NAGH), T130, R144, Q225, T240, and R304. H42 serves as the catalytic Proton donor. 300–306 (STTGRKR) is a binding site for substrate. GTP contacts are provided by residues R306, 332–334 (KLD), and 414–416 (STG).

This sequence belongs to the adenylosuccinate synthetase family. Homodimer. Mg(2+) serves as cofactor.

The protein localises to the cytoplasm. The enzyme catalyses IMP + L-aspartate + GTP = N(6)-(1,2-dicarboxyethyl)-AMP + GDP + phosphate + 2 H(+). Its pathway is purine metabolism; AMP biosynthesis via de novo pathway; AMP from IMP: step 1/2. Functionally, plays an important role in the de novo pathway of purine nucleotide biosynthesis. Catalyzes the first committed step in the biosynthesis of AMP from IMP. This chain is Adenylosuccinate synthetase, found in Buchnera aphidicola subsp. Acyrthosiphon pisum (strain Tuc7).